The sequence spans 78 residues: Large ribosomal subunit protein bL28 (78 aa).

It belongs to the bacterial ribosomal protein bL28 family.

In Glaesserella parasuis serovar 5 (strain SH0165) (Haemophilus parasuis), this protein is Large ribosomal subunit protein bL28.